Here is a 452-residue protein sequence, read N- to C-terminus: Phosphoglucosamine mutase (452 aa).

Ser104 functions as the Phosphoserine intermediate in the catalytic mechanism. 4 residues coordinate Mg(2+): Ser104, Asp246, Asp248, and Asp250. Residue Ser104 is modified to Phosphoserine.

Belongs to the phosphohexose mutase family. Requires Mg(2+) as cofactor. Activated by phosphorylation.

It catalyses the reaction alpha-D-glucosamine 1-phosphate = D-glucosamine 6-phosphate. In terms of biological role, catalyzes the conversion of glucosamine-6-phosphate to glucosamine-1-phosphate. The polypeptide is Phosphoglucosamine mutase (Streptomyces coelicolor (strain ATCC BAA-471 / A3(2) / M145)).